The chain runs to 449 residues: UDP-N-acetylmuramate--L-alanine ligase (449 aa).

121-127 contributes to the ATP binding site; it reads GAHGKSS.

It belongs to the MurCDEF family.

The protein resides in the cytoplasm. The catalysed reaction is UDP-N-acetyl-alpha-D-muramate + L-alanine + ATP = UDP-N-acetyl-alpha-D-muramoyl-L-alanine + ADP + phosphate + H(+). It participates in cell wall biogenesis; peptidoglycan biosynthesis. Cell wall formation. The chain is UDP-N-acetylmuramate--L-alanine ligase from Helicobacter pylori (strain P12).